The primary structure comprises 393 residues: MLVSLANWLQGHYPDSFGFLRVVQYLTFRAVMSAMTALLLGLVFGPWVIRRLTELKIGQPVREYGVQSHLVKTGTPTMGGVLILLSIAVSTLLWFDWSNRFVWVVMLVTFGFGAIGWVDDWRKVVQKNPEGMASGEKYLWQSLIGLVAAIYLAFSVSETSNLRVLELFLRWVGSGFSNDLPPKADLIVPFFKSVSYPLGVFGFIFLTYFVIVGASNAVNLTDGLDGLAIMPVVLVGSALGLFAYVTGNSVFSKYLLLPHIPGAGELLIFCAAMAGAGLAFLWFNAYPAQVFMGDVGALALGGALGTIAVIVRQEIVLGIMGGIFVVEALSVMAQVAYFKYTKKRYGQGRRILLMAPLHHHYEKKGWEETQVVVRFWIITMLLCLVGLSTLKLR.

Transmembrane regions (helical) follow at residues 29-49, 75-95, 101-121, 138-158, 194-214, 226-246, 263-283, 290-310, 315-335, and 370-390; these read RAVMSAMTALLLGLVFGPWVI, TPTMGGVLILLSIAVSTLLWF, FVWVVMLVTFGFGAIGWVDDW, YLWQSLIGLVAAIYLAFSVSE, VSYPLGVFGFIFLTYFVIVGA, GLAIMPVVLVGSALGLFAYVT, AGELLIFCAAMAGAGLAFLWF, VFMGDVGALALGGALGTIAVI, IVLGIMGGIFVVEALSVMAQV, and QVVVRFWIITMLLCLVGLSTL.

Belongs to the glycosyltransferase 4 family. MraY subfamily. The cofactor is Mg(2+).

The protein resides in the cell inner membrane. The catalysed reaction is UDP-N-acetyl-alpha-D-muramoyl-L-alanyl-gamma-D-glutamyl-meso-2,6-diaminopimeloyl-D-alanyl-D-alanine + di-trans,octa-cis-undecaprenyl phosphate = di-trans,octa-cis-undecaprenyl diphospho-N-acetyl-alpha-D-muramoyl-L-alanyl-D-glutamyl-meso-2,6-diaminopimeloyl-D-alanyl-D-alanine + UMP. Its pathway is cell wall biogenesis; peptidoglycan biosynthesis. In terms of biological role, catalyzes the initial step of the lipid cycle reactions in the biosynthesis of the cell wall peptidoglycan: transfers peptidoglycan precursor phospho-MurNAc-pentapeptide from UDP-MurNAc-pentapeptide onto the lipid carrier undecaprenyl phosphate, yielding undecaprenyl-pyrophosphoryl-MurNAc-pentapeptide, known as lipid I. The polypeptide is Phospho-N-acetylmuramoyl-pentapeptide-transferase (Leptothrix cholodnii (strain ATCC 51168 / LMG 8142 / SP-6) (Leptothrix discophora (strain SP-6))).